Consider the following 185-residue polypeptide: MIDEILFEAEERMTATVEHTREDLTTIRTGRANPAMFNGVMAEYYGVPTPITQMSSISVPEPRMLLIKPYEMSSMQVIENAIRNSDLGVNPTNDGQVLRVTIPQLTEERRKDMVKLAKGKGEDGKIAIRNIRRKGMDQLKKLQKDGDAGEDEVQAAEKELDKVTAGFVAQVDEVVARKEKELMEV.

Belongs to the RRF family.

It is found in the cytoplasm. In terms of biological role, responsible for the release of ribosomes from messenger RNA at the termination of protein biosynthesis. May increase the efficiency of translation by recycling ribosomes from one round of translation to another. The sequence is that of Ribosome-recycling factor from Corynebacterium glutamicum (strain R).